The sequence spans 339 residues: Probable thylakoid lumen protein sll0997 (339 aa).

A signal peptide spans 1–26; the sequence is MAPYQSFHIGLLGLALASVWPLSACA.

It is found in the cellular thylakoid lumen. In Synechocystis sp. (strain ATCC 27184 / PCC 6803 / Kazusa), this protein is Probable thylakoid lumen protein sll0997.